The following is a 913-amino-acid chain: SUN domain-containing protein 1 (913 aa).

The segment at Met1–Ser139 is LMNA-binding. At Met1–Lys415 the chain is on the nuclear side. 2 positions are modified to phosphoserine: Ser48 and Ser66. Positions Ser69–Ala81 are enriched in polar residues. Residues Ser69–Asp120 are disordered. Positions Leu108–Asp120 are enriched in low complexity. Ser139 is subject to Phosphoserine. An SYNE2-binding region spans residues Ser209 to Asp302. The tract at residues Val223 to Asp302 is EMD-binding. A helical membrane pass occupies residues Val416–Gln436. The Perinuclear space portion of the chain corresponds to Gly437–Gln913. Residues Arg456–Pro485 form a disordered region. 2 coiled-coil regions span residues Gly491 to Ser533 and His563 to Ala638. Residues Thr703–Gln913 form a sufficient for interaction with SYNE1 and SYNE2 region. The SUN domain maps to Gly751–Ile912.

Core component of the LINC complex which is composed of inner nuclear membrane SUN domain-containing proteins coupled to outer nuclear membrane KASH domain-containing nesprins. SUN and KASH domain-containing proteins seem to bind each other promiscuously; however, differentially expression of LINC complex constituents is giving rise to specific assemblies. At least SUN1/2-containing core LINC complexes are proposed to be hexameric composed of three protomers of each KASH and SUN domain-containing protein. Interacts with KASH5 (via the last 22 amino acids); this interaction mediates KASH5 telomere localization by forming a SUN1:KASH5 LINC complex. Isoform 5 is proposed to form a non-nuclear spermatogenesis-specific LINC complex with SYNE3 during sperm head formation. Interacts with SYNE2 and SYNE1; probably forming respective LINC complexes. Interacts with A-type lamin with a strong preference for unprocessed A-type lamin compared with the mature protein. Interaction with lamins B1 and C is hardly detectable. Interacts with NAT10. Interacts with EMD and TSNAX. Associates with the nuclear pore complex (NPC). Interacts with CCDC79/TERB1; promoting the accumulation of the LINC complex complexes at the telomere-nuclear envelope attachment sites. Interacts with IRAG2. Interacts (via KASH domain) with TMEM258. The disulfide bond with KASH domain-containing nesprins is required for stability of the respective LINC complexes under tensile forces. In terms of tissue distribution, widely expressed. Expressed in cochlear outer hair cells (at protein level). Seven isoforms are expressed in testis including testis-specific isoform 5. Isoform 5 is the only isoform expressed at the end of sperm differentiation. Six isoforms are expressed in muscle, heart and brain, four isoforms in kidney and three isoforms in liver.

The protein localises to the nucleus inner membrane. The protein resides in the cytoplasmic vesicle. Its subcellular location is the secretory vesicle. It localises to the acrosome outer membrane. Its function is as follows. As a component of the LINC (LInker of Nucleoskeleton and Cytoskeleton) complex involved in the connection between the nuclear lamina and the cytoskeleton. The nucleocytoplasmic interactions established by the LINC complex play an important role in the transmission of mechanical forces across the nuclear envelope and in nuclear movement and positioning. Required for interkinetic nuclear migration (INM) and essential for nucleokinesis and centrosome-nucleus coupling during radial neuronal migration in the cerebral cortex and during glial migration. Involved in telomere attachment to nuclear envelope in the prophase of meiosis implicating a SUN1/2:KASH5 LINC complex in which SUN1 and SUN2 seem to act at least partial redundantly. Required for gametogenesis and involved in selective gene expression of coding and non-coding RNAs needed for gametogenesis. Helps to define the distribution of nuclear pore complexes (NPCs). Required for efficient localization of SYNE4 in the nuclear envelope. May be involved in nuclear remodeling during sperm head formation in spermatogenesis. May play a role in DNA repair by suppressing non-homologous end joining repair to facilitate the repair of DNA cross-links. Functionally, isoform 5 may be involved in nuclear remodeling during sperm head formation in spermatogenesis. A probable SUN1 isoform 5:SYNE3 LINC complex may tether spermatid nuclei to anterior cytoskeletal structures such as actin filaments present at membraneous junctions of spermatids and Sertoli cells. The chain is SUN domain-containing protein 1 from Mus musculus (Mouse).